An 82-amino-acid chain; its full sequence is U-scoloptoxin(21)-Sm3a (82 aa).

An N-terminal signal peptide occupies residues 1–21; it reads MKIIALLLMVFLDFIIVNXAE.

Belongs to the scoloptoxin-21 family. In terms of tissue distribution, expressed by the venom gland.

It localises to the secreted. This chain is U-scoloptoxin(21)-Sm3a, found in Scolopendra morsitans (Tanzanian blue ringleg centipede).